The sequence spans 166 residues: Putative tRNA (cytidine(34)-2'-O)-methyltransferase (166 aa).

Leu-83, Gly-109, Ile-130, and Ser-138 together coordinate S-adenosyl-L-methionine.

This sequence belongs to the class IV-like SAM-binding methyltransferase superfamily. RNA methyltransferase TrmH family. TrmL subfamily.

The protein localises to the cytoplasm. It carries out the reaction cytidine(34) in tRNA + S-adenosyl-L-methionine = 2'-O-methylcytidine(34) in tRNA + S-adenosyl-L-homocysteine + H(+). The catalysed reaction is 5-carboxymethylaminomethyluridine(34) in tRNA(Leu) + S-adenosyl-L-methionine = 5-carboxymethylaminomethyl-2'-O-methyluridine(34) in tRNA(Leu) + S-adenosyl-L-homocysteine + H(+). Functionally, could methylate the ribose at the nucleotide 34 wobble position in tRNA. The polypeptide is Putative tRNA (cytidine(34)-2'-O)-methyltransferase (Mycoplasma genitalium (strain ATCC 33530 / DSM 19775 / NCTC 10195 / G37) (Mycoplasmoides genitalium)).